A 340-amino-acid chain; its full sequence is Ketol-acid reductoisomerase (NADP(+)) (340 aa).

The KARI N-terminal Rossmann domain occupies 3–182; that stretch reads VQMEYEKDVK…GAARVGLLET (180 aa). NADP(+)-binding positions include 26–29, R49, S53, and 83–86; these read YGSQ and DEIQ. The active site involves H108. An NADP(+)-binding site is contributed by G134. Residues 183 to 328 enclose the KARI C-terminal knotted domain; sequence TYKEETEEDL…AELRKAMPFV (146 aa). 4 residues coordinate Mg(2+): D191, E195, E227, and E231. S252 is a binding site for substrate.

Belongs to the ketol-acid reductoisomerase family. Requires Mg(2+) as cofactor.

The catalysed reaction is (2R)-2,3-dihydroxy-3-methylbutanoate + NADP(+) = (2S)-2-acetolactate + NADPH + H(+). It carries out the reaction (2R,3R)-2,3-dihydroxy-3-methylpentanoate + NADP(+) = (S)-2-ethyl-2-hydroxy-3-oxobutanoate + NADPH + H(+). Its pathway is amino-acid biosynthesis; L-isoleucine biosynthesis; L-isoleucine from 2-oxobutanoate: step 2/4. The protein operates within amino-acid biosynthesis; L-valine biosynthesis; L-valine from pyruvate: step 2/4. Involved in the biosynthesis of branched-chain amino acids (BCAA). Catalyzes an alkyl-migration followed by a ketol-acid reduction of (S)-2-acetolactate (S2AL) to yield (R)-2,3-dihydroxy-isovalerate. In the isomerase reaction, S2AL is rearranged via a Mg-dependent methyl migration to produce 3-hydroxy-3-methyl-2-ketobutyrate (HMKB). In the reductase reaction, this 2-ketoacid undergoes a metal-dependent reduction by NADPH to yield (R)-2,3-dihydroxy-isovalerate. This Streptococcus thermophilus (strain ATCC BAA-491 / LMD-9) protein is Ketol-acid reductoisomerase (NADP(+)).